The chain runs to 191 residues: MKKSLLGLTFASLMFSAGSAVAADYKIDKEGQHAFVNFRIQHLGYSWLYGTFKDFDGTFTFDEKNPAADKVNVTINTTSVDTNHTERDKHLRSADFLNTAKYPQATFTSTSVKKDGDELDITGDLTLNGVTKPVTLEAKLIGQGDDPWGGKRAGFEAEGKIKLKDFNIKTDLGPASQEVDLIISVEGVQQK.

Positions 1 to 22 (MKKSLLGLTFASLMFSAGSAVA) are cleaved as a signal peptide.

It belongs to the UPF0312 family. Type 1 subfamily.

It is found in the periplasm. The chain is Protein YceI from Escherichia coli O6:H1 (strain CFT073 / ATCC 700928 / UPEC).